The chain runs to 429 residues: Adenylosuccinate synthetase (429 aa).

Residues 12 to 18 (GDEGKGK) and 40 to 42 (GHT) each bind GTP. D13 functions as the Proton acceptor in the catalytic mechanism. Mg(2+) is bound by residues D13 and G40. IMP-binding positions include 13–16 (DEGK), 38–41 (NAGH), T128, R142, Q223, T238, and R302. The active-site Proton donor is H41. Residue 298–304 (TVTGRPR) participates in substrate binding. Residues R304, 330–332 (LLD), and 412–414 (SVG) each bind GTP.

The protein belongs to the adenylosuccinate synthetase family. In terms of assembly, homodimer. Mg(2+) serves as cofactor.

It is found in the cytoplasm. It catalyses the reaction IMP + L-aspartate + GTP = N(6)-(1,2-dicarboxyethyl)-AMP + GDP + phosphate + 2 H(+). It functions in the pathway purine metabolism; AMP biosynthesis via de novo pathway; AMP from IMP: step 1/2. Its function is as follows. Plays an important role in the de novo pathway of purine nucleotide biosynthesis. Catalyzes the first committed step in the biosynthesis of AMP from IMP. This is Adenylosuccinate synthetase from Limosilactobacillus fermentum (strain NBRC 3956 / LMG 18251) (Lactobacillus fermentum).